The chain runs to 103 residues: MRTLTLNELDSVSGGASGRDIAMAIGTLSGQFVAGGIGAAAGGVAGGAIYDYASTHKPNPAMSPSGLGGTIKQKPEGIPSEAWNYAAGRLCNWSPNNLSDVCL.

The propeptide occupies 1 to 15 (MRTLTLNELDSVSGG). Cys91 and Cys102 are joined by a disulfide.

Its subcellular location is the secreted. Its function is as follows. Colicin V kills sensitive cells by disrupting the membrane potential. Colicins are polypeptide toxins produced by, and active against E.coli and closely related bacteria. The polypeptide is Colicin-V (cvaC) (Escherichia coli).